Here is a 302-residue protein sequence, read N- to C-terminus: Small ribosomal subunit protein uS2 (302 aa).

The interval 275–302 is disordered; that stretch reads EGEGESEAEPVVAKKKPVRAKRPAVKAE. The segment covering 287 to 302 has biased composition (basic residues); it reads AKKKPVRAKRPAVKAE.

It belongs to the universal ribosomal protein uS2 family.

This Opitutus terrae (strain DSM 11246 / JCM 15787 / PB90-1) protein is Small ribosomal subunit protein uS2.